The primary structure comprises 1191 residues: Major DNA-binding protein (1191 aa).

The disordered stretch occupies residues E288–G307. A zinc finger spans residues C498 to H511. A Required for filament formation motif is present at residues F841–W842. Residues K1166–L1191 are required for nuclear localization.

It belongs to the herpesviridae major DNA-binding protein family. In terms of assembly, homooligomers. Forms double-helical filaments necessary for the formation of replication compartments within the host nucleus. Interacts with the origin-binding protein. Interacts with the helicase primase complex; this interaction stimulates primer synthesis activity of the helicase-primase complex. Interacts with the DNA polymerase. Interacts with the alkaline exonuclease; this interaction increases its nuclease processivity.

The protein localises to the host nucleus. In terms of biological role, plays several crucial roles in viral infection. Participates in the opening of the viral DNA origin to initiate replication by interacting with the origin-binding protein. May disrupt loops, hairpins and other secondary structures present on ssDNA to reduce and eliminate pausing of viral DNA polymerase at specific sites during elongation. Promotes viral DNA recombination by performing strand-transfer, characterized by the ability to transfer a DNA strand from a linear duplex to a complementary single-stranded DNA circle. Can also catalyze the renaturation of complementary single strands. Additionally, reorganizes the host cell nucleus, leading to the formation of prereplicative sites and replication compartments. This process is driven by the protein which can form double-helical filaments in the absence of DNA. This chain is Major DNA-binding protein, found in Gallid herpesvirus 2 (strain Chicken/Md5/ATCC VR-987) (GaHV-2).